A 291-amino-acid polypeptide reads, in one-letter code: Shikimate dehydrogenase (NADP(+)) (291 aa).

Residues 14-16 (SKS) and Thr61 contribute to the shikimate site. Lys65 acts as the Proton acceptor in catalysis. Glu77 provides a ligand contact to NADP(+). Shikimate is bound by residues Asn86 and Asp102. NADP(+) is bound by residues 139 to 143 (GAGGA), 164 to 169 (NRTFSR), and Leu232. Shikimate is bound at residue Tyr234. Gly256 is an NADP(+) binding site.

This sequence belongs to the shikimate dehydrogenase family. Homodimer.

It carries out the reaction shikimate + NADP(+) = 3-dehydroshikimate + NADPH + H(+). Its pathway is metabolic intermediate biosynthesis; chorismate biosynthesis; chorismate from D-erythrose 4-phosphate and phosphoenolpyruvate: step 4/7. Its function is as follows. Involved in the biosynthesis of the chorismate, which leads to the biosynthesis of aromatic amino acids. Catalyzes the reversible NADPH linked reduction of 3-dehydroshikimate (DHSA) to yield shikimate (SA). This Blochmanniella pennsylvanica (strain BPEN) protein is Shikimate dehydrogenase (NADP(+)).